The sequence spans 202 residues: Cytochrome c oxidase assembly protein CtaG (202 aa).

Residues 1–14 lie on the Cytoplasmic side of the membrane; that stretch reads MSDKAAAPRKQGRN. Residues 15–37 form a helical; Signal-anchor for type II membrane protein membrane-spanning segment; sequence NGAVVMMCLSFVFGMGAMSYAAV. Residues 38–202 are Periplasmic-facing; sequence PLYRIFCQVT…GGTVKIEKKL (165 aa).

This sequence belongs to the COX11/CtaG family.

It is found in the cell inner membrane. Functionally, exerts its effect at some terminal stage of cytochrome c oxidase synthesis, probably by being involved in the insertion of the copper B into subunit I. This is Cytochrome c oxidase assembly protein CtaG from Rhizobium etli (strain ATCC 51251 / DSM 11541 / JCM 21823 / NBRC 15573 / CFN 42).